The following is a 264-amino-acid chain: Small ribosomal subunit protein uS2 (264 aa).

The disordered stretch occupies residues Val228–Glu264. The segment covering Val234 to Glu264 has biased composition (acidic residues).

Belongs to the universal ribosomal protein uS2 family.

The sequence is that of Small ribosomal subunit protein uS2 from Symbiobacterium thermophilum (strain DSM 24528 / JCM 14929 / IAM 14863 / T).